The following is a 93-amino-acid chain: Large ribosomal subunit protein uL23 (93 aa).

Belongs to the universal ribosomal protein uL23 family. Part of the 50S ribosomal subunit. Contacts protein L29, and trigger factor when it is bound to the ribosome.

Its function is as follows. One of the early assembly proteins it binds 23S rRNA. One of the proteins that surrounds the polypeptide exit tunnel on the outside of the ribosome. Forms the main docking site for trigger factor binding to the ribosome. This is Large ribosomal subunit protein uL23 from Campylobacter lari (strain RM2100 / D67 / ATCC BAA-1060).